A 108-amino-acid polypeptide reads, in one-letter code: Peptidyl-prolyl cis-trans isomerase Fkbp12 (108 aa).

Residues M1–Q21 are disordered. Residues G20–E108 enclose the PPIase FKBP-type domain.

The protein belongs to the FKBP-type PPIase family. FKBP1 subfamily.

Its subcellular location is the cytoplasm. It catalyses the reaction [protein]-peptidylproline (omega=180) = [protein]-peptidylproline (omega=0). PPIases accelerate the folding of proteins. It catalyzes the cis-trans isomerization of proline imidic peptide bonds in oligopeptides. Binds to ligand-free TGF beta type I receptor, from which it is released upon a ligand-induced, type II receptor mediated phosphorylation of the type I receptor. Binding is inhibitory to the signaling pathways of the TGF beta family ligands. This is Peptidyl-prolyl cis-trans isomerase Fkbp12 from Drosophila melanogaster (Fruit fly).